We begin with the raw amino-acid sequence, 166 residues long: MLMPKKNRIAIYELLFKEGVMVAKKDVHLAKHPELADKNVPNLHVMKAMQSLKSCGYVKEQFAWRHFYWYLTNEGIQYLRDFLHLPPEIVPATLRRQTRPETARPRPKGLEGERPARLARGEGDRDAYRRSAAPPGADKKAEAGAGAATEFQFRGGFGRGRGQQPQ.

Positions 95–166 (RRQTRPETAR…FGRGRGQQPQ (72 aa)) are disordered. A compositionally biased stretch (basic and acidic residues) spans 98–129 (TRPETARPRPKGLEGERPARLARGEGDRDAYR). The segment covering 143–154 (AGAGAATEFQFR) has biased composition (low complexity). Positions 155 to 166 (GGFGRGRGQQPQ) are enriched in gly residues.

Belongs to the eukaryotic ribosomal protein eS10 family. Component of the small ribosomal subunit.

It is found in the cytoplasm. It localises to the nucleus. The protein localises to the nucleolus. Functionally, component of the 40S ribosomal subunit. The ribosome is a large ribonucleoprotein complex responsible for the synthesis of proteins in the cell. This is Small ribosomal subunit protein eS10 (rps10) from Ictalurus punctatus (Channel catfish).